Here is a 203-residue protein sequence, read N- to C-terminus: FMN-dependent NADH:quinone oxidoreductase (203 aa).

FMN is bound by residues Ser9, 15-17 (SVS), and 139-142 (TRGG).

The protein belongs to the azoreductase type 1 family. In terms of assembly, homodimer. FMN is required as a cofactor.

The catalysed reaction is 2 a quinone + NADH + H(+) = 2 a 1,4-benzosemiquinone + NAD(+). It carries out the reaction N,N-dimethyl-1,4-phenylenediamine + anthranilate + 2 NAD(+) = 2-(4-dimethylaminophenyl)diazenylbenzoate + 2 NADH + 2 H(+). Its function is as follows. Quinone reductase that provides resistance to thiol-specific stress caused by electrophilic quinones. In terms of biological role, also exhibits azoreductase activity. Catalyzes the reductive cleavage of the azo bond in aromatic azo compounds to the corresponding amines. The polypeptide is FMN-dependent NADH:quinone oxidoreductase (Albidiferax ferrireducens (strain ATCC BAA-621 / DSM 15236 / T118) (Rhodoferax ferrireducens)).